Consider the following 103-residue polypeptide: Cyanovirin-N homolog (103 aa).

Belongs to the cyanovirin-N family.

In terms of biological role, mannose-binding lectin. In Tuber borchii (White truffle), this protein is Cyanovirin-N homolog.